Reading from the N-terminus, the 159-residue chain is Probable epoxidase scpX (159 aa).

The first 25 residues, 1-25 (MATLIRLLRLLPVASSSAVLMFALD), serve as a signal peptide directing secretion. The next 2 membrane-spanning stretches (helical) occupy residues 59–79 (WVLIIFYPVNYILGILNLFIS) and 96–116 (LLFSIAHMFYLFRALKLIAAI). Residues Asn-124 and Asn-136 are each glycosylated (N-linked (GlcNAc...) asparagine). Residues 139–159 (RALLTDLPAWLCFIAAALKAL) traverse the membrane as a helical segment.

It belongs to the epoxidase xenD family.

Its subcellular location is the membrane. It participates in mycotoxin biosynthesis. In terms of biological role, probable epoxidase; part of the gene scp cluster that mediates the biosynthesis of a hirsutellone-like compound that has still to be identified. This chain is Probable epoxidase scpX, found in Mollisia scopiformis (Conifer needle endophyte fungus).